Here is a 429-residue protein sequence, read N- to C-terminus: UDP-N-acetylglucosamine 1-carboxyvinyltransferase (429 aa).

Phosphoenolpyruvate is bound at residue 22–23 (KN). Arginine 96 contributes to the UDP-N-acetyl-alpha-D-glucosamine binding site. The Proton donor role is filled by cysteine 120. Cysteine 120 is subject to 2-(S-cysteinyl)pyruvic acid O-phosphothioketal. UDP-N-acetyl-alpha-D-glucosamine-binding positions include 125 to 129 (RPVDL), aspartate 310, and isoleucine 332.

Belongs to the EPSP synthase family. MurA subfamily.

It is found in the cytoplasm. It catalyses the reaction phosphoenolpyruvate + UDP-N-acetyl-alpha-D-glucosamine = UDP-N-acetyl-3-O-(1-carboxyvinyl)-alpha-D-glucosamine + phosphate. It functions in the pathway cell wall biogenesis; peptidoglycan biosynthesis. Its function is as follows. Cell wall formation. Adds enolpyruvyl to UDP-N-acetylglucosamine. This is UDP-N-acetylglucosamine 1-carboxyvinyltransferase from Caulobacter vibrioides (strain ATCC 19089 / CIP 103742 / CB 15) (Caulobacter crescentus).